The primary structure comprises 183 residues: uncharacterized protein (183 aa).

Positions 105-149 are enriched in low complexity; it reads YNTNNSNTNTNYNNNNNNNNNNNNNNNNNNNKNNNNNNNNNNSNS. A disordered region spans residues 105 to 151; it reads YNTNNSNTNTNYNNNNNNNNNNNNNNNNNNNKNNNNNNNNNNSNSKI.

This is an uncharacterized protein from Dictyostelium discoideum (Social amoeba).